The primary structure comprises 357 residues: Glycerol-3-phosphate dehydrogenase [NAD(P)+] (357 aa).

4 residues coordinate NADPH: serine 30, phenylalanine 31, arginine 51, and lysine 124. Residues lysine 124 and glycine 152 each contribute to the sn-glycerol 3-phosphate site. An NADPH-binding site is contributed by alanine 156. Residues lysine 207, aspartate 260, serine 270, arginine 271, and asparagine 272 each contribute to the sn-glycerol 3-phosphate site. The Proton acceptor role is filled by lysine 207. NADPH is bound at residue arginine 271. Glutamate 297 contributes to the NADPH binding site.

Belongs to the NAD-dependent glycerol-3-phosphate dehydrogenase family.

Its subcellular location is the cytoplasm. The catalysed reaction is sn-glycerol 3-phosphate + NAD(+) = dihydroxyacetone phosphate + NADH + H(+). It catalyses the reaction sn-glycerol 3-phosphate + NADP(+) = dihydroxyacetone phosphate + NADPH + H(+). The protein operates within membrane lipid metabolism; glycerophospholipid metabolism. In terms of biological role, catalyzes the reduction of the glycolytic intermediate dihydroxyacetone phosphate (DHAP) to sn-glycerol 3-phosphate (G3P), the key precursor for phospholipid synthesis. This is Glycerol-3-phosphate dehydrogenase [NAD(P)+] from Acinetobacter baumannii (strain SDF).